The following is a 471-amino-acid chain: Siroheme synthase 1 (471 aa).

Positions 1–203 are precorrin-2 dehydrogenase /sirohydrochlorin ferrochelatase; that stretch reads MEYLPLFAQL…GDTRAAEAVL (203 aa). NAD(+) is bound by residues 22–23 and 43–44; these read EV and KK. At serine 128 the chain carries Phosphoserine. Residues 215 to 471 are uroporphyrinogen-III C-methyltransferase; sequence GEIILVGAGP…NLRSSVVNLA (257 aa). Proline 224 is a binding site for S-adenosyl-L-methionine. Aspartate 247 functions as the Proton acceptor in the catalytic mechanism. Lysine 269 serves as the catalytic Proton donor. S-adenosyl-L-methionine is bound by residues 300–302, isoleucine 305, 330–331, methionine 382, and glycine 411; these read GGD and TA.

In the N-terminal section; belongs to the precorrin-2 dehydrogenase / sirohydrochlorin ferrochelatase family. It in the C-terminal section; belongs to the precorrin methyltransferase family.

It catalyses the reaction uroporphyrinogen III + 2 S-adenosyl-L-methionine = precorrin-2 + 2 S-adenosyl-L-homocysteine + H(+). It carries out the reaction precorrin-2 + NAD(+) = sirohydrochlorin + NADH + 2 H(+). The enzyme catalyses siroheme + 2 H(+) = sirohydrochlorin + Fe(2+). The protein operates within cofactor biosynthesis; adenosylcobalamin biosynthesis; precorrin-2 from uroporphyrinogen III: step 1/1. It functions in the pathway cofactor biosynthesis; adenosylcobalamin biosynthesis; sirohydrochlorin from precorrin-2: step 1/1. It participates in porphyrin-containing compound metabolism; siroheme biosynthesis; precorrin-2 from uroporphyrinogen III: step 1/1. Its pathway is porphyrin-containing compound metabolism; siroheme biosynthesis; siroheme from sirohydrochlorin: step 1/1. The protein operates within porphyrin-containing compound metabolism; siroheme biosynthesis; sirohydrochlorin from precorrin-2: step 1/1. Multifunctional enzyme that catalyzes the SAM-dependent methylations of uroporphyrinogen III at position C-2 and C-7 to form precorrin-2 via precorrin-1. Then it catalyzes the NAD-dependent ring dehydrogenation of precorrin-2 to yield sirohydrochlorin. Finally, it catalyzes the ferrochelation of sirohydrochlorin to yield siroheme. In Cronobacter sakazakii (strain ATCC BAA-894) (Enterobacter sakazakii), this protein is Siroheme synthase 1.